A 172-amino-acid chain; its full sequence is MSKATKRKHVVKEVLEDYVTPTEDQQIMRVLGSNGNNLHEAVTGSGERFLLSMPTKFRKNIWIKRGDFVIVDPIKEGGKVKGEISFILYRDHIQHLRKLGVWPEGFQEDRTSGERNEGTQKERSEEKEEEEGDSESEDDDSDLFVNTNRATVLYSESEEETDEDEEEDKGRA.

An S1-like domain is found at 5–89; it reads TKRKHVVKEV…VKGEISFILY (85 aa). Residues 107-126 show a composition bias toward basic and acidic residues; that stretch reads QEDRTSGERNEGTQKERSEE. Residues 107-172 are disordered; it reads QEDRTSGERN…EDEEEDKGRA (66 aa). Acidic residues-rich tracts occupy residues 127–142 and 156–172; these read KEEE…DDSD and ESEE…KGRA.

It belongs to the EIF1AD family.

The protein resides in the nucleus. May play a role into cellular response to oxidative stress. May decrease cell proliferation. This is Probable RNA-binding protein EIF1AD (eif1ad) from Danio rerio (Zebrafish).